Reading from the N-terminus, the 431-residue chain is tRNA(Ile)-lysidine synthase (431 aa).

19–24 contributes to the ATP binding site; the sequence is STGIDS.

Belongs to the tRNA(Ile)-lysidine synthase family.

The protein localises to the cytoplasm. The enzyme catalyses cytidine(34) in tRNA(Ile2) + L-lysine + ATP = lysidine(34) in tRNA(Ile2) + AMP + diphosphate + H(+). In terms of biological role, ligates lysine onto the cytidine present at position 34 of the AUA codon-specific tRNA(Ile) that contains the anticodon CAU, in an ATP-dependent manner. Cytidine is converted to lysidine, thus changing the amino acid specificity of the tRNA from methionine to isoleucine. The sequence is that of tRNA(Ile)-lysidine synthase from Staphylococcus aureus (strain COL).